Consider the following 110-residue polypeptide: Large ribosomal subunit protein mL60 (110 aa).

This sequence belongs to the mitochondrion-specific ribosomal protein mL60 family. In terms of assembly, component of the mitochondrial large ribosomal subunit (mt-LSU). Mature N.crassa 74S mitochondrial ribosomes consist of a small (37S) and a large (54S) subunit. The 37S small subunit contains a 16S ribosomal RNA (16S mt-rRNA) and 32 different proteins. The 54S large subunit contains a 23S rRNA (23S mt-rRNA) and 42 different proteins.

It is found in the mitochondrion. Component of the mitochondrial ribosome (mitoribosome), a dedicated translation machinery responsible for the synthesis of mitochondrial genome-encoded proteins, including at least some of the essential transmembrane subunits of the mitochondrial respiratory chain. The mitoribosomes are attached to the mitochondrial inner membrane and translation products are cotranslationally integrated into the membrane. The polypeptide is Large ribosomal subunit protein mL60 (mrpl31) (Neurospora crassa (strain ATCC 24698 / 74-OR23-1A / CBS 708.71 / DSM 1257 / FGSC 987)).